The sequence spans 1679 residues: GRIP and coiled-coil domain-containing protein 2 (1679 aa).

M1 carries the N-acetylmethionine modification. Disordered regions lie at residues 1 to 23 (MEDS…KLET) and 1466 to 1522 (LKSE…SAGT). Residues 35 to 1469 (KQMMLLQKAK…ETQLFQLKSE (1435 aa)) adopt a coiled-coil conformation. 2 positions are modified to phosphoserine: S1474 and S1478. Residues 1474–1483 (SPASSHQPSK) show a composition bias toward polar residues. The segment at 1569–1608 (HLNGLLRETEATNAILMEQIKLLKSEIRRLERNQEREKSV) is mediates interaction with RAB6A. Residues 1569-1679 (HLNGLLRETE…SYLHSWSGLR (111 aa)) are mediates interaction with RAB9A. The region spanning 1604–1654 (REKSVANLEYLKNVLLRFIFLKPGSERERLLPVIDTMLQLSPEEKGKLATV) is the GRIP domain.

As to quaternary structure, homodimer. Interacts (via GRIP domain) with RAB6A (preferentially in its GTP-bound form). May interact (RAB6A-dependent) with ARL1; might be involved in GCC2 Golgi localization. Interacts with CLASP1 and CLASP2; recruits both proteins to membranes of the TGN. Interacts with STX16. Interacts (probably via GRIP domain) with RAB9A (preferentially in its GTP-bound form).

Its subcellular location is the cytoplasm. It is found in the golgi apparatus. The protein resides in the trans-Golgi network membrane. Functionally, golgin which probably tethers transport vesicles to the trans-Golgi network (TGN) and regulates vesicular transport between the endosomes and the Golgi. As a RAB9A effector it is involved in recycling of the mannose 6-phosphate receptor from the late endosomes to the TGN. May also play a role in transport between the recycling endosomes and the Golgi. Required for maintenance of the Golgi structure, it is involved in the biogenesis of noncentrosomal, Golgi-associated microtubules through recruitment of CLASP1 and CLASP2. This is GRIP and coiled-coil domain-containing protein 2 (Gcc2) from Rattus norvegicus (Rat).